Consider the following 397-residue polypeptide: Cytochrome b (397 aa).

4 consecutive transmembrane segments (helical) span residues 48-68 (FGSM…LLSA), 92-113 (WMLR…YAHI), 128-148 (WYFG…GYTL), and 193-213 (FYTL…LHLF). The heme b site is built by His-98 and His-112. Positions 197 and 211 each coordinate heme b. Residue His-216 coordinates a ubiquinone. A run of 4 helical transmembrane segments spans residues 241-261 (IKDL…VCVD), 303-323 (AGGV…PTLH), 335-355 (LNQV…WIGA), and 362-382 (YIIL…WTPF).

This sequence belongs to the cytochrome b family. In terms of assembly, the main subunits of complex b-c1 are: cytochrome b, cytochrome c1 and the Rieske protein. Heme b serves as cofactor.

Its subcellular location is the mitochondrion inner membrane. Component of the ubiquinol-cytochrome c reductase complex (complex III or cytochrome b-c1 complex) that is part of the mitochondrial respiratory chain. The b-c1 complex mediates electron transfer from ubiquinol to cytochrome c. Contributes to the generation of a proton gradient across the mitochondrial membrane that is then used for ATP synthesis. This chain is Cytochrome b (MT-CYB), found in Mytilus edulis (Blue mussel).